The chain runs to 139 residues: Large ribosomal subunit protein bL21 (139 aa).

The protein belongs to the bacterial ribosomal protein bL21 family. As to quaternary structure, part of the 50S ribosomal subunit. Contacts protein L20.

Functionally, this protein binds to 23S rRNA in the presence of protein L20. This is Large ribosomal subunit protein bL21 from Prochlorococcus marinus (strain NATL2A).